A 420-amino-acid polypeptide reads, in one-letter code: Enolase (420 aa).

Q162 contacts (2R)-2-phosphoglycerate. The active-site Proton donor is the E206. D241, E282, and D308 together coordinate Mg(2+). K333, R362, S363, and K384 together coordinate (2R)-2-phosphoglycerate. The Proton acceptor role is filled by K333.

This sequence belongs to the enolase family. The cofactor is Mg(2+).

It localises to the cytoplasm. The protein localises to the secreted. It is found in the cell surface. The enzyme catalyses (2R)-2-phosphoglycerate = phosphoenolpyruvate + H2O. The protein operates within carbohydrate degradation; glycolysis; pyruvate from D-glyceraldehyde 3-phosphate: step 4/5. In terms of biological role, catalyzes the reversible conversion of 2-phosphoglycerate (2-PG) into phosphoenolpyruvate (PEP). It is essential for the degradation of carbohydrates via glycolysis. This chain is Enolase, found in Methanothrix thermoacetophila (strain DSM 6194 / JCM 14653 / NBRC 101360 / PT) (Methanosaeta thermophila).